The primary structure comprises 395 residues: Methylmalonyl-CoA decarboxylase subunit beta (395 aa).

9 helical membrane-spanning segments follow: residues L17–A37, L43–M63, G103–I123, S128–A148, P180–I200, I230–L250, I278–F298, L304–L324, and G374–F394.

This sequence belongs to the GcdB/MmdB/OadB family. The methylmalonyl-CoA decarboxylase is composed of four subunits: the carboxyltransferase alpha subunit (MmdA), the tunnel beta subunit (MmdB), the biotin-containing gamma subunit (MmdC) and the delta subunit (MmdD). Post-translationally, the N-terminus is blocked.

The protein resides in the cell membrane. It catalyses the reaction (S)-methylmalonyl-CoA + Na(+)(in) + H(+)(out) = propanoyl-CoA + Na(+)(out) + CO2. Its function is as follows. Tunnel subunit of the sodium ion pump methylmalonyl-CoA decarboxylase, which converts the chemical energy of a decarboxylation reaction into an electrochemical gradient of Na(+) ions across the cytoplasmic membrane, thereby creating a sodium ion motive force that is used for ATP synthesis. The beta subunit catalyzes the decarboxylation of the carboxybiotin carrier protein and the coupled export of Na(+) ions. This is Methylmalonyl-CoA decarboxylase subunit beta from Propionigenium modestum.